A 1898-amino-acid polypeptide reads, in one-letter code: Receptor-type tyrosine-protein phosphatase F (1898 aa).

Residues 1–29 (MTPEPAPGRTMVPLVPALVMLGLVAGAHG) form the signal peptide. The Extracellular segment spans residues 30 to 1254 (DSKPVFVKVP…QQQEEPELLW (1225 aa)). Ig-like C2-type domains are found at residues 33-123 (PVFV…AKLS), 135-224 (PSID…ANLY), and 232-314 (PRFS…AQVT). Residues Cys-54 and Cys-107 are joined by a disulfide bond. 68–77 (KKGKKVSSQR) is a binding site for heparin. Asn-117 carries an N-linked (GlcNAc...) asparagine glycan. Cysteines 156 and 207 form a disulfide. 2 N-linked (GlcNAc...) asparagine glycosylation sites follow: Asn-250 and Asn-295. An intrachain disulfide couples Cys-253 to Cys-298. 8 Fibronectin type-III domains span residues 321–411 (PPID…TGEQ), 416–510 (PPRR…TQQG), 514–604 (QPAD…TAQS), 609–706 (PPQK…TDED), 711–810 (PPRK…TTGA), 811–905 (VPGR…PEDV), 909–1001 (FPQN…TMPV), and 1005–1089 (FAKN…TAPD). Positions 399–418 (PPSEAVRARTGEQAPSSPPR) are disordered. Residues 693–713 (GPESSPVLVRTDEDVPSGPPR) form a disordered region. Residue Asn-721 is glycosylated (N-linked (GlcNAc...) asparagine). 2 N-linked (GlcNAc...) asparagine glycosylation sites follow: Asn-941 and Asn-957. Residues 1255-1275 (VTGPVLAVILIVLIVIAILLF) traverse the membrane as a helical segment. Topologically, residues 1276-1898 (KRKRTHSPSS…YLGSFDHYAT (623 aa)) are cytoplasmic. Ser-1296 carries the post-translational modification Phosphoserine. 2 consecutive Tyrosine-protein phosphatase domains span residues 1343 to 1598 (FSQE…LLEA) and 1630 to 1889 (MELE…ALEY). Residues Asp-1507, 1539–1545 (CSAGVGR), and Gln-1583 each bind substrate. The active-site Phosphocysteine intermediate is Cys-1539. The active-site Phosphocysteine intermediate is the Cys-1830.

Belongs to the protein-tyrosine phosphatase family. Receptor class 2A subfamily. As to quaternary structure, interacts with GRIP1. Interacts with PPFIA1, PPFIA2 and PPFIA3. Interacts with INSR.

Its subcellular location is the membrane. It catalyses the reaction O-phospho-L-tyrosyl-[protein] + H2O = L-tyrosyl-[protein] + phosphate. In terms of biological role, possible cell adhesion receptor. It possesses an intrinsic protein tyrosine phosphatase activity (PTPase) and dephosphorylates EPHA2 regulating its activity. The first PTPase domain has enzymatic activity, while the second one seems to affect the substrate specificity of the first one. This Bos taurus (Bovine) protein is Receptor-type tyrosine-protein phosphatase F (PTPRF).